The chain runs to 320 residues: Olfactory receptor 2AT4 (320 aa).

Over 1-31 (MDATACNESVDGSPVFYLLGIPSLPETFFLP) the chain is Extracellular. N-linked (GlcNAc...) asparagine glycosylation occurs at asparagine 7. Residues 32 to 52 (VFFIFLLFYLLILMGNALILV) traverse the membrane as a helical segment. Topologically, residues 53–62 (AVVAEPSLHK) are cytoplasmic. Residues 63-83 (PMYFFLINLSTLDILFTTTTV) traverse the membrane as a helical segment. At 84–102 (PKMLSLFLLGDRFLSFSSC) the chain is on the extracellular side. Cysteine 102 and cysteine 184 form a disulfide bridge. A helical transmembrane segment spans residues 103 to 123 (LLQMYLFQSFTCSEAFILVVM). The Cytoplasmic portion of the chain corresponds to 124 to 145 (AYDRYVAICHPLHYPVLMNPQT). The helical transmembrane segment at 146 to 166 (NATLAASAWLTALLLPIPAVV) threads the bilayer. Topologically, residues 167–200 (RTSQMAYNSIAYIYHCFCDHLAVVQASCSDTTPQ) are extracellular. A helical membrane pass occupies residues 201 to 221 (TLMGFCIAMVVSFLPLLLVLL). Topologically, residues 222–245 (SYVHILASVLRISSLEGRAKAFST) are cytoplasmic. The chain crosses the membrane as a helical span at residues 246–266 (CSSHLLVVGTYYSSIAIAYVA). The Extracellular segment spans residues 267–276 (YRADLPLDFH). The chain crosses the membrane as a helical span at residues 277–297 (IMGNVVYAILTPILNPLIYTL). At 298 to 320 (RNRDVKAAITKIMSQDPGCDRSI) the chain is on the cytoplasmic side.

This sequence belongs to the G-protein coupled receptor 1 family. Detected in the keratinocytes of the epidermis (at protein level). Detected in hair follicles in proximal outer root sheath and hair matrix keratinocytes (at protein level).

Its subcellular location is the cell membrane. Its function is as follows. Olfactory receptor. Activated by the synthetic sandalwood odorant sandalore. Endogenous ligand is unknown. The activity of this receptor is probably mediated by G proteins which induce elevation of intracellular Ca(2+), a cAMP-dependent pathway and phosphorylation of MAPK1/ERK2, MAPK3/ERK1 and p38 MAPKs. Activation of OR2AT4 induces proliferation, migration, and re-epithelialization during wound-healing processes of keratinocytes. Stimulation of OR2AT4 by sandalore promotes hair growth by decreasing apoptosis and increasing production of the anagen-prolonging growth factor IGF1 as well as other pathways involving various kinases. The chain is Olfactory receptor 2AT4 from Homo sapiens (Human).